The primary structure comprises 280 residues: Pantothenate synthetase (280 aa).

Position 30–37 (30–37 (MGALHRGH)) interacts with ATP. His-37 serves as the catalytic Proton donor. Gln-61 lines the (R)-pantoate pocket. Gln-61 contacts beta-alanine. 148-151 (GEKD) provides a ligand contact to ATP. Residue Gln-154 coordinates (R)-pantoate. Residues Val-177 and 185–188 (LSSR) each bind ATP.

Belongs to the pantothenate synthetase family. Homodimer.

It localises to the cytoplasm. The enzyme catalyses (R)-pantoate + beta-alanine + ATP = (R)-pantothenate + AMP + diphosphate + H(+). It functions in the pathway cofactor biosynthesis; (R)-pantothenate biosynthesis; (R)-pantothenate from (R)-pantoate and beta-alanine: step 1/1. Catalyzes the condensation of pantoate with beta-alanine in an ATP-dependent reaction via a pantoyl-adenylate intermediate. This is Pantothenate synthetase from Azobacteroides pseudotrichonymphae genomovar. CFP2.